The sequence spans 360 residues: Phospho-N-acetylmuramoyl-pentapeptide-transferase (360 aa).

10 helical membrane-spanning segments follow: residues 27 to 47, 73 to 93, 97 to 117, 132 to 152, 164 to 184, 199 to 219, 236 to 256, 263 to 283, 288 to 308, and 337 to 357; these read ILSVLTALFIAFWVGPIMIRM, TMGGALILVAIVISTLLWGDL, FVWITLGVLFVFGAVGWVDDW, WKYLWLSVGALGAGCALFFTA, FFKSVAINMGWFYIVLTYFVI, GLAIMPTVLVGGALGIFAYAG, AGELVIISAALCGAGLGFLWF, VFMGDVGALSLGAVLGVMAVI, IVLFIMGGVFVMETVSVMLQV, and KIIVRFWIITVILVLVGLATL.

The protein belongs to the glycosyltransferase 4 family. MraY subfamily. Mg(2+) serves as cofactor.

Its subcellular location is the cell inner membrane. The enzyme catalyses UDP-N-acetyl-alpha-D-muramoyl-L-alanyl-gamma-D-glutamyl-meso-2,6-diaminopimeloyl-D-alanyl-D-alanine + di-trans,octa-cis-undecaprenyl phosphate = di-trans,octa-cis-undecaprenyl diphospho-N-acetyl-alpha-D-muramoyl-L-alanyl-D-glutamyl-meso-2,6-diaminopimeloyl-D-alanyl-D-alanine + UMP. Its pathway is cell wall biogenesis; peptidoglycan biosynthesis. In terms of biological role, catalyzes the initial step of the lipid cycle reactions in the biosynthesis of the cell wall peptidoglycan: transfers peptidoglycan precursor phospho-MurNAc-pentapeptide from UDP-MurNAc-pentapeptide onto the lipid carrier undecaprenyl phosphate, yielding undecaprenyl-pyrophosphoryl-MurNAc-pentapeptide, known as lipid I. The chain is Phospho-N-acetylmuramoyl-pentapeptide-transferase from Alcanivorax borkumensis (strain ATCC 700651 / DSM 11573 / NCIMB 13689 / SK2).